The chain runs to 552 residues: Leucine-rich repeat-containing protein 31 (552 aa).

Residues 1-65 (MSQTRKKTSS…SETAKPLSSE (65 aa)) are disordered. Residues 31–41 (ESRKEDNDLKT) are compositionally biased toward basic and acidic residues. The span at 42–58 (SDSQPSDWIQKTATSET) shows a compositional bias: polar residues. LRR repeat units follow at residues 227-246 (SLEV…LNSI), 255-275 (NLKV…KILD), 283-293 (ELRKLDLSCNK), 311-331 (HLQV…MSLT), 339-360 (NLQE…NLLS), 367-387 (ALKS…TALA), 395-415 (ALEV…KLLL), 423-443 (SLQV…ALLA), and 453-475 (KLQK…MFCQ).

The polypeptide is Leucine-rich repeat-containing protein 31 (LRRC31) (Homo sapiens (Human)).